The chain runs to 438 residues: chitinase-like effector (438 aa).

A signal peptide spans 1–23 (MFTPLSSVTALLALSSAFLGAQA). Residues 54–437 (FIAKGYYTGW…DAIRSGAGLS (384 aa)) enclose the GH18 domain. A chitin-binding site is contributed by tryptophan 416.

It belongs to the glycosyl hydrolase 18 family.

The protein localises to the secreted. Functionally, catalytically impaired chitinase that binds efficiently to chitin, but not to chitosan, xylan, or cellulose. Despite the lack of chitinolytic activity, retains substrate binding specificity and acts as an effector to prevent chitin-triggered immunity by sequestering immunogenic chitin fragments. Does not function in the protection of fungal cell wall against plant hydrolytic enzymes. The chain is chitinase-like effector from Moniliophthora perniciosa (Witches'-broom disease fungus).